The following is a 172-amino-acid chain: Translation initiation factor IF-3 (172 aa).

This sequence belongs to the IF-3 family. As to quaternary structure, monomer.

The protein resides in the cytoplasm. Functionally, IF-3 binds to the 30S ribosomal subunit and shifts the equilibrium between 70S ribosomes and their 50S and 30S subunits in favor of the free subunits, thus enhancing the availability of 30S subunits on which protein synthesis initiation begins. The polypeptide is Translation initiation factor IF-3 (Geobacter sulfurreducens (strain ATCC 51573 / DSM 12127 / PCA)).